The chain runs to 356 residues: Uroporphyrinogen decarboxylase (356 aa).

The coproporphyrinogen I site is built by arginine 33, alanine 35, arginine 37, arginine 46, aspartate 82, tyrosine 159, serine 214, and histidine 334. 3 residues coordinate coproporphyrinogen III: arginine 33, alanine 35, and arginine 37. Positions 82, 159, 214, and 334 each coordinate coproporphyrinogen III.

The protein belongs to the uroporphyrinogen decarboxylase family. In terms of assembly, homodimer.

The protein resides in the cytoplasm. It localises to the cytosol. The enzyme catalyses uroporphyrinogen III + 4 H(+) = coproporphyrinogen III + 4 CO2. The protein operates within porphyrin-containing compound metabolism; protoporphyrin-IX biosynthesis; coproporphyrinogen-III from 5-aminolevulinate: step 4/4. Functionally, catalyzes the decarboxylation of four acetate groups of uroporphyrinogen-III to yield coproporphyrinogen-III. The sequence is that of Uroporphyrinogen decarboxylase from Drosophila melanogaster (Fruit fly).